Here is a 388-residue protein sequence, read N- to C-terminus: Dual-specificity RNA methyltransferase RlmN (388 aa).

Residue Glu-109 is the Proton acceptor of the active site. The Radical SAM core domain maps to 115–354; it reads EEDRATLCVS…TIVRKTRGDD (240 aa). An intrachain disulfide couples Cys-122 to Cys-359. Positions 129, 133, and 136 each coordinate [4Fe-4S] cluster. S-adenosyl-L-methionine-binding positions include 183–184, Ser-215, 237–239, and Asn-316; these read GE and SLH. The S-methylcysteine intermediate role is filled by Cys-359.

It belongs to the radical SAM superfamily. RlmN family. Requires [4Fe-4S] cluster as cofactor.

It localises to the cytoplasm. The enzyme catalyses adenosine(2503) in 23S rRNA + 2 reduced [2Fe-2S]-[ferredoxin] + 2 S-adenosyl-L-methionine = 2-methyladenosine(2503) in 23S rRNA + 5'-deoxyadenosine + L-methionine + 2 oxidized [2Fe-2S]-[ferredoxin] + S-adenosyl-L-homocysteine. It carries out the reaction adenosine(37) in tRNA + 2 reduced [2Fe-2S]-[ferredoxin] + 2 S-adenosyl-L-methionine = 2-methyladenosine(37) in tRNA + 5'-deoxyadenosine + L-methionine + 2 oxidized [2Fe-2S]-[ferredoxin] + S-adenosyl-L-homocysteine. In terms of biological role, specifically methylates position 2 of adenine 2503 in 23S rRNA and position 2 of adenine 37 in tRNAs. m2A2503 modification seems to play a crucial role in the proofreading step occurring at the peptidyl transferase center and thus would serve to optimize ribosomal fidelity. This Enterobacter sp. (strain 638) protein is Dual-specificity RNA methyltransferase RlmN.